Here is a 302-residue protein sequence, read N- to C-terminus: NAD kinase (302 aa).

The active-site Proton acceptor is the D79. NAD(+) is bound by residues 79–80 (DG), 153–154 (ND), R181, D183, 194–199 (TAYALS), A218, and Q252.

This sequence belongs to the NAD kinase family. A divalent metal cation is required as a cofactor.

The protein localises to the cytoplasm. It carries out the reaction NAD(+) + ATP = ADP + NADP(+) + H(+). In terms of biological role, involved in the regulation of the intracellular balance of NAD and NADP, and is a key enzyme in the biosynthesis of NADP. Catalyzes specifically the phosphorylation on 2'-hydroxyl of the adenosine moiety of NAD to yield NADP. This chain is NAD kinase, found in Ralstonia nicotianae (strain ATCC BAA-1114 / GMI1000) (Ralstonia solanacearum).